We begin with the raw amino-acid sequence, 247 residues long: Probable transcriptional regulatory protein GSU1074 (247 aa).

Belongs to the TACO1 family.

The protein resides in the cytoplasm. The polypeptide is Probable transcriptional regulatory protein GSU1074 (Geobacter sulfurreducens (strain ATCC 51573 / DSM 12127 / PCA)).